Reading from the N-terminus, the 349-residue chain is Isopentenyl-diphosphate delta-isomerase (349 aa).

Residue 6-7 (RK) coordinates substrate. FMN is bound by residues 62 to 64 (AMT), serine 93, and asparagine 122. Glutamine 152 provides a ligand contact to substrate. Glutamate 153 lines the Mg(2+) pocket. Residues lysine 184, threonine 214, 258 to 259 (GG), and 280 to 281 (AG) each bind FMN.

The protein belongs to the IPP isomerase type 2 family. Homooctamer. Dimer of tetramers. FMN serves as cofactor. It depends on NADPH as a cofactor. The cofactor is Mg(2+).

The protein localises to the cytoplasm. The enzyme catalyses isopentenyl diphosphate = dimethylallyl diphosphate. Functionally, involved in the biosynthesis of isoprenoids. Catalyzes the 1,3-allylic rearrangement of the homoallylic substrate isopentenyl (IPP) to its allylic isomer, dimethylallyl diphosphate (DMAPP). This Bacillus cereus (strain B4264) protein is Isopentenyl-diphosphate delta-isomerase.